Reading from the N-terminus, the 366-residue chain is Arfaptin-1 (366 aa).

Residues methionine 1–leucine 78 are disordered. Alanine 2 is subject to N-acetylalanine. Serine 5 bears the Phosphoserine mark. A compositionally biased stretch (basic and acidic residues) spans glycine 22 to histidine 35. A phosphoserine mark is found at serine 36 and serine 39. A compositionally biased stretch (polar residues) spans serine 44 to phenylalanine 53. Phosphoserine is present on residues serine 69, serine 79, and serine 125. An AH domain is found at threonine 146–lysine 346. Position 354 is a phosphothreonine (threonine 354).

In terms of assembly, forms homodimers or heterodimers with ARFIP2. Interacts with non-myristoylated GTP-bound ARF3, but not to GDP-bound ARF3. Interacts with ARF1. Binds with lower affinity to ARF5 and with very little affinity to ARF6. Interacts with ARL1. Interacts with ATG9A.

Its subcellular location is the golgi apparatus. It is found in the trans-Golgi network membrane. Its function is as follows. Plays a role in controlling biogenesis of secretory granules at the trans-Golgi network. Mechanistically, binds ARF-GTP at the neck of a growing secretory granule precursor and forms a protective scaffold. Once the granule precursor has been completely loaded, active PRKD1 phosphorylates ARFIP1 and releases it from ARFs. In turn, ARFs induce fission. Through this mechanism, ensures proper secretory granule formation at the Golgi of pancreatic beta cells. This chain is Arfaptin-1, found in Rattus norvegicus (Rat).